The chain runs to 193 residues: Probable nicotinate-nucleotide adenylyltransferase (193 aa).

Belongs to the NadD family.

The catalysed reaction is nicotinate beta-D-ribonucleotide + ATP + H(+) = deamido-NAD(+) + diphosphate. It functions in the pathway cofactor biosynthesis; NAD(+) biosynthesis; deamido-NAD(+) from nicotinate D-ribonucleotide: step 1/1. Catalyzes the reversible adenylation of nicotinate mononucleotide (NaMN) to nicotinic acid adenine dinucleotide (NaAD). This is Probable nicotinate-nucleotide adenylyltransferase from Coprothermobacter proteolyticus (strain ATCC 35245 / DSM 5265 / OCM 4 / BT).